A 431-amino-acid chain; its full sequence is Leucine carboxyl methyltransferase 1 (431 aa).

S-adenosyl-L-methionine contacts are provided by residues Arg-103, Gly-131, Asp-159, and 219 to 220; that span reads DL. The disordered stretch occupies residues 228–268; it reads QPQQPLPPGVPIGSRGLHASPFTPGSTTQHEEQTEETSLPQ. Residue Glu-289 coordinates S-adenosyl-L-methionine.

It belongs to the methyltransferase superfamily. LCMT family.

The enzyme catalyses [phosphatase 2A protein]-C-terminal L-leucine + S-adenosyl-L-methionine = [phosphatase 2A protein]-C-terminal L-leucine methyl ester + S-adenosyl-L-homocysteine. Its function is as follows. Methylates the carboxyl group of the C-terminal leucine residue of protein phosphatase 2A catalytic subunits to form alpha-leucine ester residues. This chain is Leucine carboxyl methyltransferase 1 (ppm-1), found in Neurospora crassa (strain ATCC 24698 / 74-OR23-1A / CBS 708.71 / DSM 1257 / FGSC 987).